We begin with the raw amino-acid sequence, 172 residues long: Endoribonuclease YbeY (172 aa).

3 residues coordinate Zn(2+): H137, H141, and H147.

This sequence belongs to the endoribonuclease YbeY family. Requires Zn(2+) as cofactor.

It is found in the cytoplasm. Its function is as follows. Single strand-specific metallo-endoribonuclease involved in late-stage 70S ribosome quality control and in maturation of the 3' terminus of the 16S rRNA. The chain is Endoribonuclease YbeY from Dehalococcoides mccartyi (strain ATCC BAA-2266 / KCTC 15142 / 195) (Dehalococcoides ethenogenes (strain 195)).